A 125-amino-acid polypeptide reads, in one-letter code: Glycine cleavage system H protein (125 aa).

Residues 19–101 (IATIGITDYA…MGDGWFIKLR (83 aa)) form the Lipoyl-binding domain. Lys-60 carries the N6-lipoyllysine modification.

Belongs to the GcvH family. The glycine cleavage system is composed of four proteins: P, T, L and H. It depends on (R)-lipoate as a cofactor.

Functionally, the glycine cleavage system catalyzes the degradation of glycine. The H protein shuttles the methylamine group of glycine from the P protein to the T protein. The chain is Glycine cleavage system H protein from Parvibaculum lavamentivorans (strain DS-1 / DSM 13023 / NCIMB 13966).